Reading from the N-terminus, the 219-residue chain is Inner membrane protein YghB (219 aa).

The Cytoplasmic portion of the chain corresponds to 1–17 (MAVIQDIIAALWQHDFA). The helical transmembrane segment at 18–38 (ALADPHIVSVVYFVMFATLFL) threads the bilayer. The Periplasmic portion of the chain corresponds to 39-67 (ENGLLPASFLPGDSLLILAGALIAQGVMD). Residues 68 to 88 (FLPTIAILTAAASLGCWLSYI) traverse the membrane as a helical segment. Residues 89–160 (QGRWLGNTKT…RRFQFFNWLS (72 aa)) lie on the Cytoplasmic side of the membrane. Residues 161 to 181 (GLLWVSVVTSFGYALSMIPFV) traverse the membrane as a helical segment. The Periplasmic portion of the chain corresponds to 182-191 (KRHEDQVMTF). The chain crosses the membrane as a helical span at residues 192–212 (LMILPIALLTAGLLGTLFVVI). The Cytoplasmic segment spans residues 213 to 219 (KKKYCNA).

The protein belongs to the DedA family.

It is found in the cell inner membrane. This chain is Inner membrane protein YghB (yghB), found in Escherichia coli O6:H1 (strain CFT073 / ATCC 700928 / UPEC).